A 332-amino-acid chain; its full sequence is Biotin synthase (332 aa).

Residues 53 to 282 form the Radical SAM core domain; sequence HFGKKVKLNM…TKEIRISGGR (230 aa). Residues cysteine 71, cysteine 75, and cysteine 78 each coordinate [4Fe-4S] cluster. [2Fe-2S] cluster-binding residues include cysteine 115, cysteine 147, cysteine 207, and arginine 277.

Belongs to the radical SAM superfamily. Biotin synthase family. Homodimer. [4Fe-4S] cluster serves as cofactor. [2Fe-2S] cluster is required as a cofactor.

It catalyses the reaction (4R,5S)-dethiobiotin + (sulfur carrier)-SH + 2 reduced [2Fe-2S]-[ferredoxin] + 2 S-adenosyl-L-methionine = (sulfur carrier)-H + biotin + 2 5'-deoxyadenosine + 2 L-methionine + 2 oxidized [2Fe-2S]-[ferredoxin]. It participates in cofactor biosynthesis; biotin biosynthesis; biotin from 7,8-diaminononanoate: step 2/2. Functionally, catalyzes the conversion of dethiobiotin (DTB) to biotin by the insertion of a sulfur atom into dethiobiotin via a radical-based mechanism. This chain is Biotin synthase, found in Bacillus cereus (strain ATCC 14579 / DSM 31 / CCUG 7414 / JCM 2152 / NBRC 15305 / NCIMB 9373 / NCTC 2599 / NRRL B-3711).